The following is a 269-amino-acid chain: Chromosome-partitioning protein Spo0J (269 aa).

The segment at 1 to 20 (MSRKPSGLGRGLEALLPKTG) is stimulates ATPase activity of Soj by 8%. Residues 137–156 (QEEVARRVGKARSTVANALR) constitute a DNA-binding region (H-T-H motif). A required for DNA-binding; may be responsible for dimerization region spans residues 223-269 (PSPLSLELSRHLGLPVRVVGGKKGKVVIQYRSLEELEALLRRLGYQA).

It belongs to the ParB family. As to quaternary structure, homodimer, probably via the C-terminal 46 residues. Dimerization of the N-terminal H-T-H region may require DNA-binding. Probably interacts with ATPase Soj.

Probably involved in chromosome partitioning. Binds to a plasmid centromere-like site parS. Stimulates the ATPase activity 10-fold of Soj; the first 20 residues may be responsible. In Thermus thermophilus (strain ATCC BAA-163 / DSM 7039 / HB27), this protein is Chromosome-partitioning protein Spo0J (spo0C).